A 424-amino-acid chain; its full sequence is PtdIns3K complex I subunit atg38 (424 aa).

Residues 50–78 (LIKRCANNQIEELMVRIRELRESLPNKQT) are a coiled coil. Residues 73-212 (LPNKQTPISM…DPAYQNTNEQ (140 aa)) form a required for interaction with atg8 region. The AIM signature appears at 178 to 181 (FLIV). Residues 268 to 284 (LSEEEMGRSHKREESFK) show a composition bias toward basic and acidic residues. Positions 268–299 (LSEEEMGRSHKREESFKRAFGHASSSESSIGE) are disordered. Residues 390-420 (TVDSQLKIKQLETQIATLQKQLEQFQTSTLD) adopt a coiled-coil conformation.

It belongs to the ATG38 family. In terms of assembly, component of the autophagy-specific vps34 PI3-kinase complex I composed of vps15, atg6, pik3/vps34, atg14 and atg38. Interacts (via AIM motif) with atg8; the interaction is direct and leads to recruitment of the autophagy-specific vps34 PI3-kinase complex I to the phagophore assembly site.

It localises to the preautophagosomal structure membrane. Its subcellular location is the cytoplasm. The protein localises to the cytosol. In terms of biological role, functions as a part of the autophagy-specific VPS34 PI3-kinase complex I that plays a role in autophagosome assembly. This complex is essential to recruit the atg8-phosphatidylinositol conjugate and the atg12-atg5 conjugate to the pre-autophagosomal structure. By binding to atg8 at the phagophore assembly site, atg38 helps establish a positive feedback loop for recruitment of phagophore assembly proteins, including atg8. This is PtdIns3K complex I subunit atg38 from Schizosaccharomyces pombe (strain 972 / ATCC 24843) (Fission yeast).